The sequence spans 213 residues: Flagellar transcriptional regulator FlhC (213 aa).

Zn(2+)-binding residues include C138, C141, C158, and C161.

This sequence belongs to the FlhC family. As to quaternary structure, heterohexamer composed of two FlhC and four FlhD subunits. Each FlhC binds a FlhD dimer, forming a heterotrimer, and a hexamer assembles by dimerization of two heterotrimers. It depends on Zn(2+) as a cofactor.

It localises to the cytoplasm. Functions in complex with FlhD as a master transcriptional regulator that regulates transcription of several flagellar and non-flagellar operons by binding to their promoter region. Activates expression of class 2 flagellar genes, including fliA, which is a flagellum-specific sigma factor that turns on the class 3 genes. Also regulates genes whose products function in a variety of physiological pathways. This chain is Flagellar transcriptional regulator FlhC, found in Cupriavidus metallidurans (strain ATCC 43123 / DSM 2839 / NBRC 102507 / CH34) (Ralstonia metallidurans).